Consider the following 108-residue polypeptide: MASKKARKPNRAEKKLTRSCFKKQVPQHNNINTNTIYSVPSPSPAAVLTSPGGCCTPKAKKSRIPEMLTCPPAPKKQRVSKNCVLRRRQIVFFAPPEIELFFVNAHDR.

Probable cyclin-dependent protein kinase (CDK) inhibitor that functions as a repressor of mitosis in the endoreduplication cell cycle. This Arabidopsis thaliana (Mouse-ear cress) protein is Cyclin-dependent protein kinase inhibitor SMR13.